We begin with the raw amino-acid sequence, 461 residues long: Argininosuccinate lyase (461 aa).

It belongs to the lyase 1 family. Argininosuccinate lyase subfamily.

It is found in the cytoplasm. It catalyses the reaction 2-(N(omega)-L-arginino)succinate = fumarate + L-arginine. It participates in amino-acid biosynthesis; L-arginine biosynthesis; L-arginine from L-ornithine and carbamoyl phosphate: step 3/3. The sequence is that of Argininosuccinate lyase from Streptococcus thermophilus (strain CNRZ 1066).